Reading from the N-terminus, the 695-residue chain is uncharacterized protein (695 aa).

Disordered stretches follow at residues Met1–Lys112 and Met242–His262. A compositionally biased stretch (low complexity) spans Asp32 to Ser47. Residues Lys96 to Gln107 are compositionally biased toward basic and acidic residues. The tr-type G domain maps to Lys278–His492. GTP contacts are provided by residues Gly287–Lys294, Ile357–Asn361, and Thr417–Asp420.

The protein belongs to the TRAFAC class translation factor GTPase superfamily. Classic translation factor GTPase family.

It is found in the cytoplasm. It localises to the nucleus. This is an uncharacterized protein from Schizosaccharomyces pombe (strain 972 / ATCC 24843) (Fission yeast).